Reading from the N-terminus, the 337-residue chain is Glyceraldehyde-3-phosphate dehydrogenase 3, cytosolic (337 aa).

The tract at residues 1 to 151 (MAKIKIGING…YKSDINIVSN (151 aa)) is binding to NAD. NAD(+)-binding positions include 13 to 14 (RI), aspartate 35, and arginine 82. Positions 152–337 (ASCTTNCLAP…DLIRHMNSTK (186 aa)) are catalytic. D-glyceraldehyde 3-phosphate is bound by residues 153–155 (SCT), threonine 184, 213–214 (TG), and arginine 236. The Nucleophile role is filled by cysteine 154. Asparagine 318 is an NAD(+) binding site.

It belongs to the glyceraldehyde-3-phosphate dehydrogenase family. As to quaternary structure, homotetramer.

The protein localises to the cytoplasm. The catalysed reaction is D-glyceraldehyde 3-phosphate + phosphate + NAD(+) = (2R)-3-phospho-glyceroyl phosphate + NADH + H(+). It functions in the pathway carbohydrate degradation; glycolysis; pyruvate from D-glyceraldehyde 3-phosphate: step 1/5. Key enzyme in glycolysis that catalyzes the first step of the pathway by converting D-glyceraldehyde 3-phosphate (G3P) into 3-phospho-D-glyceroyl phosphate. Essential for the maintenance of cellular ATP levels and carbohydrate metabolism. This chain is Glyceraldehyde-3-phosphate dehydrogenase 3, cytosolic (GAPC3), found in Zea mays (Maize).